Here is a 944-residue protein sequence, read N- to C-terminus: Protein translocase subunit SecA (944 aa).

Residues Gln-90, Gly-108–Thr-112, and Asp-509 contribute to the ATP site. Residues Val-533–Ser-565 form a disordered region.

This sequence belongs to the SecA family. As to quaternary structure, monomer and homodimer. Part of the essential Sec protein translocation apparatus which comprises SecA, SecYEG and auxiliary proteins SecDF. Other proteins may also be involved.

It is found in the cell inner membrane. The protein localises to the cellular thylakoid membrane. The protein resides in the cytoplasm. The enzyme catalyses ATP + H2O + cellular proteinSide 1 = ADP + phosphate + cellular proteinSide 2.. Its function is as follows. Part of the Sec protein translocase complex. Interacts with the SecYEG preprotein conducting channel. Has a central role in coupling the hydrolysis of ATP to the transfer of proteins into and across the cell membrane, serving as an ATP-driven molecular motor driving the stepwise translocation of polypeptide chains across the membrane. Probably participates in protein translocation into and across both the cytoplasmic and thylakoid membranes in cyanobacterial cells. The chain is Protein translocase subunit SecA from Prochlorococcus marinus (strain NATL1A).